The sequence spans 958 residues: Valine--tRNA ligase (958 aa).

The 'HIGH' region signature appears at 45–55; sequence PNVTGSLHMGH. Residues 571 to 575 carry the 'KMSKS' region motif; sequence KMSKS. K574 is an ATP binding site. Positions 892 to 958 form a coiled coil; the sequence is AAERTRLDKE…EALERLKQAS (67 aa).

The protein belongs to the class-I aminoacyl-tRNA synthetase family. ValS type 1 subfamily. In terms of assembly, monomer.

The protein localises to the cytoplasm. It catalyses the reaction tRNA(Val) + L-valine + ATP = L-valyl-tRNA(Val) + AMP + diphosphate. Catalyzes the attachment of valine to tRNA(Val). As ValRS can inadvertently accommodate and process structurally similar amino acids such as threonine, to avoid such errors, it has a 'posttransfer' editing activity that hydrolyzes mischarged Thr-tRNA(Val) in a tRNA-dependent manner. In Bradyrhizobium diazoefficiens (strain JCM 10833 / BCRC 13528 / IAM 13628 / NBRC 14792 / USDA 110), this protein is Valine--tRNA ligase.